We begin with the raw amino-acid sequence, 101 residues long: ATP-dependent Clp protease adapter protein ClpS 2 (101 aa).

Belongs to the ClpS family. Binds to the N-terminal domain of the chaperone ClpA.

Involved in the modulation of the specificity of the ClpAP-mediated ATP-dependent protein degradation. The polypeptide is ATP-dependent Clp protease adapter protein ClpS 2 (Mesorhizobium japonicum (strain LMG 29417 / CECT 9101 / MAFF 303099) (Mesorhizobium loti (strain MAFF 303099))).